Consider the following 66-residue polypeptide: Alpha-like toxin BeM9 (66 aa).

In terms of domain architecture, LCN-type CS-alpha/beta spans 2 to 66 (RDAYIAKPHN…VPIRIPGKCH (65 aa)). 4 disulfides stabilise this stretch: Cys12/Cys65, Cys16/Cys38, Cys24/Cys48, and Cys28/Cys50.

The protein belongs to the long (4 C-C) scorpion toxin superfamily. Sodium channel inhibitor family. Alpha subfamily. As to expression, expressed by the venom gland.

Its subcellular location is the secreted. Its function is as follows. Alpha toxins bind voltage-independently at site-3 of sodium channels (Nav) and inhibit the inactivation of the activated channels, thereby blocking neuronal transmission. This toxin is active on both mammals and insects, since it inhibits inactivation of rNav1.4/SCN4A, hNav1.5/SCN5A, mNav1.6/SCN8A and insect BgNav1 and DmNav1 channels. In vivo, it shows paralytic activity in mice. The polypeptide is Alpha-like toxin BeM9 (Mesobuthus eupeus (Lesser Asian scorpion)).